Reading from the N-terminus, the 1155-residue chain is DNA-directed RNA polymerase subunit beta (1155 aa).

The protein belongs to the RNA polymerase beta chain family. In terms of assembly, the RNAP catalytic core consists of 2 alpha, 1 beta, 1 beta' and 1 omega subunit. When a sigma factor is associated with the core the holoenzyme is formed, which can initiate transcription.

It catalyses the reaction RNA(n) + a ribonucleoside 5'-triphosphate = RNA(n+1) + diphosphate. In terms of biological role, DNA-dependent RNA polymerase catalyzes the transcription of DNA into RNA using the four ribonucleoside triphosphates as substrates. The polypeptide is DNA-directed RNA polymerase subunit beta (Borrelia recurrentis (strain A1)).